Reading from the N-terminus, the 316-residue chain is Beta-galactosidase small subunit (316 aa).

This sequence belongs to the bacterial beta-galactosidase small subunit family. Heterodimer of a large (LacL) and a small subunit (LacM).

It carries out the reaction Hydrolysis of terminal non-reducing beta-D-galactose residues in beta-D-galactosides.. Component of a beta-galactosidase. The chain is Beta-galactosidase small subunit (lacM) from Lactobacillus acidophilus (strain ATCC 700396 / NCK56 / N2 / NCFM).